Consider the following 886-residue polypeptide: DNA mismatch repair protein MutS (886 aa).

Residue G626–S633 coordinates ATP.

The protein belongs to the DNA mismatch repair MutS family.

Its function is as follows. This protein is involved in the repair of mismatches in DNA. It is possible that it carries out the mismatch recognition step. This protein has a weak ATPase activity. This Burkholderia ambifaria (strain ATCC BAA-244 / DSM 16087 / CCUG 44356 / LMG 19182 / AMMD) (Burkholderia cepacia (strain AMMD)) protein is DNA mismatch repair protein MutS.